Here is a 93-residue protein sequence, read N- to C-terminus: HssA/B-like protein 23 (93 aa).

It belongs to the hssA/B family.

This is HssA/B-like protein 23 (hssl23) from Dictyostelium discoideum (Social amoeba).